The following is a 311-amino-acid chain: 4-hydroxy-tetrahydrodipicolinate synthase (311 aa).

Pyruvate is bound at residue T51. The Proton donor/acceptor role is filled by Y140. The active-site Schiff-base intermediate with substrate is the K168. I209 serves as a coordination point for pyruvate.

Belongs to the DapA family. In terms of assembly, homotetramer; dimer of dimers.

Its subcellular location is the cytoplasm. It carries out the reaction L-aspartate 4-semialdehyde + pyruvate = (2S,4S)-4-hydroxy-2,3,4,5-tetrahydrodipicolinate + H2O + H(+). It functions in the pathway amino-acid biosynthesis; L-lysine biosynthesis via DAP pathway; (S)-tetrahydrodipicolinate from L-aspartate: step 3/4. Catalyzes the condensation of (S)-aspartate-beta-semialdehyde [(S)-ASA] and pyruvate to 4-hydroxy-tetrahydrodipicolinate (HTPA). In Streptococcus pneumoniae (strain ATCC 700669 / Spain 23F-1), this protein is 4-hydroxy-tetrahydrodipicolinate synthase.